Consider the following 383-residue polypeptide: Centractin (383 aa).

Residues 227–246 (PQKEEELLEPDSSSSKPVQP) are disordered.

The protein belongs to the actin family. ARP1 subfamily.

Its subcellular location is the cytoplasm. It is found in the cytoskeleton. The protein localises to the microtubule organizing center. The protein resides in the centrosome. Component of a multi-subunit complex, PPK2 (poly P kinase complex 2) involved in microtubule based vesicle motility. It is associated with the centrosome. PPK2 complex can synthesize a poly chain of hundreds of phosphate residues linked by ATP-like bonds. This is Centractin (arpA) from Dictyostelium discoideum (Social amoeba).